The following is a 112-amino-acid chain: Ribosomal processing cysteine protease Prp (112 aa).

His22 functions as the Proton donor in the catalytic mechanism. Cys34 serves as the catalytic Nucleophile.

This sequence belongs to the Prp family. In terms of assembly, homodimer.

An essential cysteine protease that cleaves the N-terminus from ribosomal protein bL27. This is Ribosomal processing cysteine protease Prp from Bacillus subtilis (strain 168).